The primary structure comprises 159 residues: Ribosome maturation factor RimP (159 aa).

It belongs to the RimP family.

The protein resides in the cytoplasm. Required for maturation of 30S ribosomal subunits. The chain is Ribosome maturation factor RimP from Geobacter metallireducens (strain ATCC 53774 / DSM 7210 / GS-15).